Here is a 293-residue protein sequence, read N- to C-terminus: Succinate--CoA ligase [ADP-forming] subunit alpha (293 aa).

Residues 21-24 (TGKQ), K47, and 99-101 (ITE) contribute to the CoA site. Position 162 (Y162) interacts with substrate. H249 serves as the catalytic Tele-phosphohistidine intermediate.

The protein belongs to the succinate/malate CoA ligase alpha subunit family. Heterotetramer of two alpha and two beta subunits.

The catalysed reaction is succinate + ATP + CoA = succinyl-CoA + ADP + phosphate. It catalyses the reaction GTP + succinate + CoA = succinyl-CoA + GDP + phosphate. Its pathway is carbohydrate metabolism; tricarboxylic acid cycle; succinate from succinyl-CoA (ligase route): step 1/1. Its function is as follows. Succinyl-CoA synthetase functions in the citric acid cycle (TCA), coupling the hydrolysis of succinyl-CoA to the synthesis of either ATP or GTP and thus represents the only step of substrate-level phosphorylation in the TCA. The alpha subunit of the enzyme binds the substrates coenzyme A and phosphate, while succinate binding and nucleotide specificity is provided by the beta subunit. This Methanothermobacter thermautotrophicus (strain ATCC 29096 / DSM 1053 / JCM 10044 / NBRC 100330 / Delta H) (Methanobacterium thermoautotrophicum) protein is Succinate--CoA ligase [ADP-forming] subunit alpha.